The sequence spans 435 residues: Mitochondrial association factor 1 form b0 (435 aa).

Positions 1 to 27 (MWRIWRCRLSFLFVTGCLLGALTAGLG) are cleaved as a signal peptide. Topologically, residues 28-96 (SQMSDSVGRN…VTARRRRNRR (69 aa)) are vacuolar. The interval 43-89 (GVADASQEAGDVVEERTERTEEQVFAPGPPRRHSSESLFPRNPSVTA) is disordered. A compositionally biased stretch (basic and acidic residues) spans 55–64 (VEERTERTEE). A helical membrane pass occupies residues 97 to 117 (ITLIATAVGVAVILAALYVLR). At 118–435 (RRRAQPPQEP…ESTYLASMLD (318 aa)) the chain is on the cytoplasmic side. The segment at 120-162 (RAQPPQEPEPPTRLRTPRPRAPSGQQQPSESEPPAGVPMKPGS) is disordered.

It is found in the parasitophorous vacuole membrane. During host cell infection by tachyzoites, does not play a role in tethering the parasitophorous vacuole to the host mitochondria. The protein is Mitochondrial association factor 1 form b0 of Toxoplasma gondii.